Reading from the N-terminus, the 86-residue chain is Large ribosomal subunit protein bL27 (86 aa).

Belongs to the bacterial ribosomal protein bL27 family.

This chain is Large ribosomal subunit protein bL27, found in Xanthomonas axonopodis pv. citri (strain 306).